A 160-amino-acid chain; its full sequence is Cyclic pyranopterin monophosphate synthase (160 aa).

Residues 74–76 and 112–113 each bind substrate; these read LSH and ME. Aspartate 127 is an active-site residue.

Belongs to the MoaC family. As to quaternary structure, homohexamer; trimer of dimers.

It carries out the reaction (8S)-3',8-cyclo-7,8-dihydroguanosine 5'-triphosphate = cyclic pyranopterin phosphate + diphosphate. It functions in the pathway cofactor biosynthesis; molybdopterin biosynthesis. Its function is as follows. Catalyzes the conversion of (8S)-3',8-cyclo-7,8-dihydroguanosine 5'-triphosphate to cyclic pyranopterin monophosphate (cPMP). The sequence is that of Cyclic pyranopterin monophosphate synthase from Pelobacter propionicus (strain DSM 2379 / NBRC 103807 / OttBd1).